The following is a 243-amino-acid chain: Leucyl/phenylalanyl-tRNA--protein transferase (243 aa).

The protein belongs to the L/F-transferase family.

Its subcellular location is the cytoplasm. It catalyses the reaction N-terminal L-lysyl-[protein] + L-leucyl-tRNA(Leu) = N-terminal L-leucyl-L-lysyl-[protein] + tRNA(Leu) + H(+). The enzyme catalyses N-terminal L-arginyl-[protein] + L-leucyl-tRNA(Leu) = N-terminal L-leucyl-L-arginyl-[protein] + tRNA(Leu) + H(+). It carries out the reaction L-phenylalanyl-tRNA(Phe) + an N-terminal L-alpha-aminoacyl-[protein] = an N-terminal L-phenylalanyl-L-alpha-aminoacyl-[protein] + tRNA(Phe). Functionally, functions in the N-end rule pathway of protein degradation where it conjugates Leu, Phe and, less efficiently, Met from aminoacyl-tRNAs to the N-termini of proteins containing an N-terminal arginine or lysine. This chain is Leucyl/phenylalanyl-tRNA--protein transferase, found in Xylella fastidiosa (strain 9a5c).